Consider the following 214-residue polypeptide: ATP-dependent Clp protease proteolytic subunit (214 aa).

S106 acts as the Nucleophile in catalysis. Residue H131 is part of the active site.

Belongs to the peptidase S14 family. As to quaternary structure, fourteen ClpP subunits assemble into 2 heptameric rings which stack back to back to give a disk-like structure with a central cavity, resembling the structure of eukaryotic proteasomes.

Its subcellular location is the cytoplasm. The enzyme catalyses Hydrolysis of proteins to small peptides in the presence of ATP and magnesium. alpha-casein is the usual test substrate. In the absence of ATP, only oligopeptides shorter than five residues are hydrolyzed (such as succinyl-Leu-Tyr-|-NHMec, and Leu-Tyr-Leu-|-Tyr-Trp, in which cleavage of the -Tyr-|-Leu- and -Tyr-|-Trp bonds also occurs).. In terms of biological role, cleaves peptides in various proteins in a process that requires ATP hydrolysis. Has a chymotrypsin-like activity. Plays a major role in the degradation of misfolded proteins. In Rhodopseudomonas palustris (strain BisB5), this protein is ATP-dependent Clp protease proteolytic subunit.